We begin with the raw amino-acid sequence, 372 residues long: Heat-inducible transcription repressor HrcA (372 aa).

The segment at 296-331 (VSSGYGRSGEAGEPAGNDPVGEPETESETESQTNDM) is disordered.

It belongs to the HrcA family.

Functionally, negative regulator of class I heat shock genes (grpE-dnaK-dnaJ and groELS operons). Prevents heat-shock induction of these operons. This chain is Heat-inducible transcription repressor HrcA, found in Bifidobacterium longum subsp. infantis (strain ATCC 15697 / DSM 20088 / JCM 1222 / NCTC 11817 / S12).